We begin with the raw amino-acid sequence, 426 residues long: N-formyl-4-amino-5-aminomethyl-2-methylpyrimidine deformylase (426 aa).

Residues 1-31 adopt a coiled-coil conformation; sequence MDQQIYSLQKKVEEHKEELIQLAKTLISYQT. His-89 is a Zn(2+) binding site. Asp-91 is a catalytic residue. Zn(2+) is bound at residue Asp-122. Glu-156 serves as the catalytic Proton acceptor. The Zn(2+) site is built by Glu-157, Asp-180, and His-394.

This sequence belongs to the peptidase M20A family. Zn(2+) serves as cofactor. Requires Co(2+) as cofactor.

The enzyme catalyses N-formyl-4-amino-5-aminomethyl-2-methylpyrimidine + H2O = 4-amino-5-aminomethyl-2-methylpyrimidine + formate. It functions in the pathway cofactor biosynthesis; thiamine diphosphate biosynthesis. Catalyzes the deformylation of the formylaminopyrimidine N-formyl-4-amino-5-aminomethyl-2-methylpyrimidine (FAMP) to give the corresponding aminopyrimidine. This is N-formyl-4-amino-5-aminomethyl-2-methylpyrimidine deformylase from Bacillus subtilis (strain 168).